We begin with the raw amino-acid sequence, 153 residues long: 3-hydroxyacyl-[acyl-carrier-protein] dehydratase FabZ (153 aa).

His59 is an active-site residue.

Belongs to the thioester dehydratase family. FabZ subfamily.

It localises to the cytoplasm. It catalyses the reaction a (3R)-hydroxyacyl-[ACP] = a (2E)-enoyl-[ACP] + H2O. Its function is as follows. Involved in unsaturated fatty acids biosynthesis. Catalyzes the dehydration of short chain beta-hydroxyacyl-ACPs and long chain saturated and unsaturated beta-hydroxyacyl-ACPs. In Thermosynechococcus vestitus (strain NIES-2133 / IAM M-273 / BP-1), this protein is 3-hydroxyacyl-[acyl-carrier-protein] dehydratase FabZ.